The primary structure comprises 455 residues: Probable glycine dehydrogenase (decarboxylating) subunit 1 (455 aa).

Belongs to the GcvP family. N-terminal subunit subfamily. The glycine cleavage system is composed of four proteins: P, T, L and H. In this organism, the P 'protein' is a heterodimer of two subunits.

It carries out the reaction N(6)-[(R)-lipoyl]-L-lysyl-[glycine-cleavage complex H protein] + glycine + H(+) = N(6)-[(R)-S(8)-aminomethyldihydrolipoyl]-L-lysyl-[glycine-cleavage complex H protein] + CO2. In terms of biological role, the glycine cleavage system catalyzes the degradation of glycine. The P protein binds the alpha-amino group of glycine through its pyridoxal phosphate cofactor; CO(2) is released and the remaining methylamine moiety is then transferred to the lipoamide cofactor of the H protein. The polypeptide is Probable glycine dehydrogenase (decarboxylating) subunit 1 (Francisella tularensis subsp. tularensis (strain FSC 198)).